The chain runs to 520 residues: Cholesterol side-chain cleavage enzyme, mitochondrial (520 aa).

The transit peptide at 1–39 (MLARGLPLRSALVKACPPILSTVGEGWGHHRVGTGEGAG) directs the protein to the mitochondrion. A heme-binding site is contributed by Cys461.

This sequence belongs to the cytochrome P450 family. As to quaternary structure, interacts with FDX1/adrenodoxin. Heme serves as cofactor. Detected in adrenal cortex and corpus luteum (at protein level).

It localises to the mitochondrion inner membrane. It carries out the reaction 6 reduced [adrenodoxin] + cholesterol + 3 O2 + 6 H(+) = 4-methylpentanal + pregnenolone + 6 oxidized [adrenodoxin] + 4 H2O. It catalyses the reaction 2 reduced [adrenodoxin] + cholesterol + O2 + 2 H(+) = (22R)-hydroxycholesterol + 2 oxidized [adrenodoxin] + H2O. The enzyme catalyses (22R)-hydroxycholesterol + 2 reduced [adrenodoxin] + O2 + 2 H(+) = (20R,22R)-20,22-dihydroxycholesterol + 2 oxidized [adrenodoxin] + H2O. The catalysed reaction is (20R,22R)-20,22-dihydroxycholesterol + 2 reduced [adrenodoxin] + O2 + 2 H(+) = 4-methylpentanal + pregnenolone + 2 oxidized [adrenodoxin] + 2 H2O. It participates in lipid metabolism; C21-steroid hormone metabolism. The protein operates within steroid metabolism; cholesterol metabolism. Its function is as follows. A cytochrome P450 monooxygenase that catalyzes the side-chain hydroxylation and cleavage of cholesterol to pregnenolone, the precursor of most steroid hormones. Catalyzes three sequential oxidation reactions of cholesterol, namely the hydroxylation at C22 followed with the hydroxylation at C20 to yield 20R,22R-hydroxycholesterol that is further cleaved between C20 and C22 to yield the C21-steroid pregnenolone and 4-methylpentanal. Mechanistically, uses molecular oxygen inserting one oxygen atom into a substrate and reducing the second into a water molecule. Two electrons are provided by NADPH via a two-protein mitochondrial transfer system comprising flavoprotein FDXR (adrenodoxin/ferredoxin reductase) and nonheme iron-sulfur protein FDX1 or FDX2 (adrenodoxin/ferredoxin). The sequence is that of Cholesterol side-chain cleavage enzyme, mitochondrial (CYP11A1) from Bos taurus (Bovine).